Consider the following 178-residue polypeptide: Large ribosomal subunit protein uL6 (178 aa).

The protein belongs to the universal ribosomal protein uL6 family. As to quaternary structure, part of the 50S ribosomal subunit.

Functionally, this protein binds to the 23S rRNA, and is important in its secondary structure. It is located near the subunit interface in the base of the L7/L12 stalk, and near the tRNA binding site of the peptidyltransferase center. This chain is Large ribosomal subunit protein uL6, found in Opitutus terrae (strain DSM 11246 / JCM 15787 / PB90-1).